A 381-amino-acid chain; its full sequence is MSLAQPAGTETLVKPKRPWFSPTTKRRWQNFKANRRGYWSFWLFLILFFLSLIAEFIANDKPILASYKGEILVPVMVDYPEEKFGGFLAQTDYKSSFIQDEINANGWMIWPPIRYSYQTVNSNIPHSAPTAPFWLMDEKERCSAYPQGNADPGCTLGNLNWLGTDNQARDVTARMIYGFRISVLFGLTLTIASALVGVTAGAIQGYFGGWTDLLLQRFIEIWSSMPVLYILLIIAAILPPGFFVLLGIMLLFSWVGFVGIVRAEFLRARNFEYVRAARALGVGNWTIMFRHLLPNAMVATLTFLPFILSGSITTLTSLDFLGFGMPPGSPSLGEMIAQGKNNLQAPWLGLTAFFTMSIMLSLLIFVGEAVRDAFDPRKTFR.

5 helical membrane-spanning segments follow: residues 38 to 58 (YWSF…EFIA), 183 to 203 (VLFG…AGAI), 230 to 250 (ILLI…GIML), 292 to 312 (LLPN…SGSI), and 347 to 367 (WLGL…IFVG). An ABC transmembrane type-1 domain is found at 179-371 (FRISVLFGLT…LLIFVGEAVR (193 aa)).

Belongs to the binding-protein-dependent transport system permease family. In terms of assembly, the complex is composed of one ATP-binding protein (YejF), two transmembrane proteins (YejB and YejE) and a solute-binding protein (YepA or YejA).

The protein resides in the cell inner membrane. Part of the ABC transporter complex YejBEF-YepA involved in the uptake of muropeptides, the breakdown products of cell wall peptidoglycan. The import of muropeptides into the cell enables peptidoglycan recycling, which is vital for cell wall integrity in this bacterium. Is also probably part of the ABC transporter complex YejABEF, which is likely involved in broad-spectrum peptide import. Responsible for the translocation of the substrate across the membrane. The sequence is that of Peptidoglycan transport system permease protein YejE from Agrobacterium fabrum (strain C58 / ATCC 33970) (Agrobacterium tumefaciens (strain C58)).